Reading from the N-terminus, the 307-residue chain is Lipid droplet-associated hydrolase (307 aa).

S119 acts as the Nucleophile in catalysis. The potential amphipathic helix required for binding to lipid droplets stretch occupies residues 157 to 200 (GWVFTKVAMPLYSVFGYIFFSFFNFLPVWLRLMLIQIYFLIFSI). Transmembrane regions (helical) follow at residues 166-186 (PLYS…PVWL) and 188-208 (LMLI…LGTA). Active-site charge relay system residues include D254 and H283.

The protein belongs to the AB hydrolase superfamily. LDAH family. As to quaternary structure, interacts with the juvenile hormone hydrolase enzymes Jheh1 and Jheh2. Also interacts with Hmu, Cpr, Gp93 and Pvr. Expressed in accessory glands.

It is found in the lipid droplet. The protein localises to the endoplasmic reticulum membrane. It carries out the reaction a cholesterol ester + H2O = cholesterol + a fatty acid + H(+). In terms of biological role, probable serine lipid hydrolase associated with lipid droplets. Appears to lack or have very low cholesterol esterase activity. Appears to lack triglyceride lipase activity. Involved in cholesterol and triglyceride homeostasis; stimulates cellular triglyceride accumulation and cellular cholesterol release. Involved in negatively regulating juvenile hormone (JH) and possibly, insulin signaling activities such as triacylglycerols (TAG) storage, and thereby plays a role in the endocrine regulation of organismal growth and survival. Likely functions by enhancing the activity of the JH hydrolase enzymes Jheh1 and Jheh2. Required for lipid droplet positioning and fat storage. The chain is Lipid droplet-associated hydrolase from Drosophila melanogaster (Fruit fly).